A 559-amino-acid polypeptide reads, in one-letter code: Urocanate hydratase (559 aa).

NAD(+) is bound by residues 49–50 (GG), Gln-127, 173–175 (GMG), Asp-193, Arg-198, 239–240 (NA), 260–264 (QTSAH), 270–271 (YL), and Tyr-319. Residue Cys-407 is part of the active site. Gly-489 lines the NAD(+) pocket.

It belongs to the urocanase family. Requires NAD(+) as cofactor.

It localises to the cytoplasm. It carries out the reaction 4-imidazolone-5-propanoate = trans-urocanate + H2O. Its pathway is amino-acid degradation; L-histidine degradation into L-glutamate; N-formimidoyl-L-glutamate from L-histidine: step 2/3. Its function is as follows. Catalyzes the conversion of urocanate to 4-imidazolone-5-propionate. The protein is Urocanate hydratase of Shouchella clausii (strain KSM-K16) (Alkalihalobacillus clausii).